A 125-amino-acid chain; its full sequence is MRWQGSSRRKVTGGKVINARGKRKFEMGRESAETRISEIKRKNVHTMGGNRKVRLLQCDVANITNPKDGKTTSAPIETVLDNIANKHYIRRNILTKGSVIRTPLGTAKVTSRPGQDGVVNAVLIE.

It belongs to the eukaryotic ribosomal protein eS8 family. As to quaternary structure, part of the 30S ribosomal subunit.

The chain is Small ribosomal subunit protein eS8 from Methanosarcina barkeri (strain Fusaro / DSM 804).